Reading from the N-terminus, the 323-residue chain is tRNA uridine(34) hydroxylase (323 aa).

The region spanning 127 to 221 is the Rhodanese domain; the sequence is QDENTVVLDA…YGQDPEVQGD (95 aa). C181 functions as the Cysteine persulfide intermediate in the catalytic mechanism.

This sequence belongs to the TrhO family.

The catalysed reaction is uridine(34) in tRNA + AH2 + O2 = 5-hydroxyuridine(34) in tRNA + A + H2O. Its function is as follows. Catalyzes oxygen-dependent 5-hydroxyuridine (ho5U) modification at position 34 in tRNAs. This chain is tRNA uridine(34) hydroxylase, found in Oceanobacillus iheyensis (strain DSM 14371 / CIP 107618 / JCM 11309 / KCTC 3954 / HTE831).